The chain runs to 356 residues: GTPase Obg (356 aa).

In terms of domain architecture, Obg spans 1–159; it reads MKFLDQAKVY…RWIWLRLKLI (159 aa). The 169-residue stretch at 160–328 folds into the OBG-type G domain; the sequence is ADAGLVGLPN…ALYAIAQHLG (169 aa). GTP is bound by residues 166-173, 191-195, 213-216, 280-283, and 309-311; these read GLPNAGKS, FTTLH, DIPG, NKID, and SGV. Residues Ser173 and Thr193 each coordinate Mg(2+). The disordered stretch occupies residues 333–356; sequence DIPLPKPSNADEEDPDTDQPWSPV.

Belongs to the TRAFAC class OBG-HflX-like GTPase superfamily. OBG GTPase family. In terms of assembly, monomer. Mg(2+) is required as a cofactor.

It localises to the cytoplasm. Its function is as follows. An essential GTPase which binds GTP, GDP and possibly (p)ppGpp with moderate affinity, with high nucleotide exchange rates and a fairly low GTP hydrolysis rate. Plays a role in control of the cell cycle, stress response, ribosome biogenesis and in those bacteria that undergo differentiation, in morphogenesis control. In Hyphomonas neptunium (strain ATCC 15444), this protein is GTPase Obg.